We begin with the raw amino-acid sequence, 346 residues long: Phosphoribosylformylglycinamidine cyclo-ligase (346 aa).

Belongs to the AIR synthase family.

It localises to the cytoplasm. It catalyses the reaction 2-formamido-N(1)-(5-O-phospho-beta-D-ribosyl)acetamidine + ATP = 5-amino-1-(5-phospho-beta-D-ribosyl)imidazole + ADP + phosphate + H(+). It functions in the pathway purine metabolism; IMP biosynthesis via de novo pathway; 5-amino-1-(5-phospho-D-ribosyl)imidazole from N(2)-formyl-N(1)-(5-phospho-D-ribosyl)glycinamide: step 2/2. The sequence is that of Phosphoribosylformylglycinamidine cyclo-ligase from Shewanella piezotolerans (strain WP3 / JCM 13877).